Here is a 213-residue protein sequence, read N- to C-terminus: Pyridoxine/pyridoxamine 5'-phosphate oxidase (213 aa).

FMN contacts are provided by residues 60 to 65 (RMVLMK), 75 to 76 (YS), Lys82, and Gln104. Residue Lys65 coordinates substrate. Positions 122 and 126 each coordinate substrate. Residues 139 to 140 (QS) and Trp184 contribute to the FMN site. 190 to 192 (RLH) provides a ligand contact to substrate. FMN is bound at residue Arg194.

Belongs to the pyridoxamine 5'-phosphate oxidase family. In terms of assembly, homodimer. The cofactor is FMN.

The enzyme catalyses pyridoxamine 5'-phosphate + O2 + H2O = pyridoxal 5'-phosphate + H2O2 + NH4(+). It catalyses the reaction pyridoxine 5'-phosphate + O2 = pyridoxal 5'-phosphate + H2O2. The protein operates within cofactor metabolism; pyridoxal 5'-phosphate salvage; pyridoxal 5'-phosphate from pyridoxamine 5'-phosphate: step 1/1. Its pathway is cofactor metabolism; pyridoxal 5'-phosphate salvage; pyridoxal 5'-phosphate from pyridoxine 5'-phosphate: step 1/1. In terms of biological role, catalyzes the oxidation of either pyridoxine 5'-phosphate (PNP) or pyridoxamine 5'-phosphate (PMP) into pyridoxal 5'-phosphate (PLP). The polypeptide is Pyridoxine/pyridoxamine 5'-phosphate oxidase (Rhodopseudomonas palustris (strain BisA53)).